The chain runs to 508 residues: Cobyric acid synthase (508 aa).

In terms of domain architecture, GATase cobBQ-type spans 255–454 (ELNIAVLKLP…LHGVFESGPW (200 aa)). Cys-336 functions as the Nucleophile in the catalytic mechanism. His-446 is a catalytic residue.

It belongs to the CobB/CobQ family. CobQ subfamily.

The protein operates within cofactor biosynthesis; adenosylcobalamin biosynthesis. In terms of biological role, catalyzes amidations at positions B, D, E, and G on adenosylcobyrinic A,C-diamide. NH(2) groups are provided by glutamine, and one molecule of ATP is hydrogenolyzed for each amidation. The polypeptide is Cobyric acid synthase (Synechococcus sp. (strain CC9311)).